Here is a 177-residue protein sequence, read N- to C-terminus: Dual-action ribosomal maturation protein DarP (177 aa).

A disordered region spans residues 1–26 (MKIVGDSEHFKQPYDSDEEYVSKTED).

It belongs to the DarP family.

The protein localises to the cytoplasm. Its function is as follows. Member of a network of 50S ribosomal subunit biogenesis factors which assembles along the 30S-50S interface, preventing incorrect 23S rRNA structures from forming. Promotes peptidyl transferase center (PTC) maturation. This is Dual-action ribosomal maturation protein DarP from Shewanella sp. (strain ANA-3).